A 502-amino-acid chain; its full sequence is Histidine--tRNA ligase (502 aa).

Belongs to the class-II aminoacyl-tRNA synthetase family. Homodimer.

It is found in the cytoplasm. The enzyme catalyses tRNA(His) + L-histidine + ATP = L-histidyl-tRNA(His) + AMP + diphosphate + H(+). The chain is Histidine--tRNA ligase from Brucella suis (strain ATCC 23445 / NCTC 10510).